Here is a 448-residue protein sequence, read N- to C-terminus: Tubulin beta-2 chain (448 aa).

Residues glutamine 11, glutamate 69, serine 138, glycine 142, threonine 143, glycine 144, asparagine 204, and asparagine 226 each contribute to the GTP site. Glutamate 69 contacts Mg(2+). The disordered stretch occupies residues 429–448 (TADEDGYEYEDEEEVGEEDA).

This sequence belongs to the tubulin family. Dimer of alpha and beta chains. A typical microtubule is a hollow water-filled tube with an outer diameter of 25 nm and an inner diameter of 15 nM. Alpha-beta heterodimers associate head-to-tail to form protofilaments running lengthwise along the microtubule wall with the beta-tubulin subunit facing the microtubule plus end conferring a structural polarity. Microtubules usually have 13 protofilaments but different protofilament numbers can be found in some organisms and specialized cells. It depends on Mg(2+) as a cofactor.

Its subcellular location is the cytoplasm. It is found in the cytoskeleton. Its function is as follows. Tubulin is the major constituent of microtubules, a cylinder consisting of laterally associated linear protofilaments composed of alpha- and beta-tubulin heterodimers. Microtubules grow by the addition of GTP-tubulin dimers to the microtubule end, where a stabilizing cap forms. Below the cap, tubulin dimers are in GDP-bound state, owing to GTPase activity of alpha-tubulin. The chain is Tubulin beta-2 chain (TUBB2) from Lupinus albus (White lupine).